The sequence spans 118 residues: Basic phospholipase A2 nigexine (118 aa).

Intrachain disulfides connect Cys-11/Cys-70, Cys-26/Cys-117, Cys-28/Cys-44, Cys-43/Cys-98, Cys-50/Cys-91, Cys-59/Cys-84, and Cys-77/Cys-89. Ca(2+) contacts are provided by Tyr-27, Gly-29, and Gly-31. His-47 is a catalytic residue. Residue Asp-48 participates in Ca(2+) binding. A Coagulation factor Xa binding motif motif is present at residues 52 to 69; sequence EKAGKMGCWPYFTLYKYK. Asp-92 is an active-site residue.

The protein belongs to the phospholipase A2 family. Group I subfamily. D49 sub-subfamily. Ca(2+) is required as a cofactor. Expressed by the venom gland.

It is found in the secreted. It carries out the reaction a 1,2-diacyl-sn-glycero-3-phosphocholine + H2O = a 1-acyl-sn-glycero-3-phosphocholine + a fatty acid + H(+). In terms of biological role, snake venom phospholipase A2 (PLA2) that shows anticoagulant activity, has cytotoxic activity and affects neuromuscular transmission in vitro. PLA2 catalyzes the calcium-dependent hydrolysis of the 2-acyl groups in 3-sn-phosphoglycerides. The sequence is that of Basic phospholipase A2 nigexine from Naja pallida (Red spitting cobra).